The following is a 412-amino-acid chain: Zinc finger protein 821 (412 aa).

The segment at 26-83 is disordered; that stretch reads RQAMMKTDFPGDLGSQRQAIQQLRDQDSSSSDSEGDEEETTQDEVSSHTSEEDGGVVK. Acidic residues predominate over residues 58-67; that stretch reads SEGDEEETTQ. 2 consecutive C2H2-type zinc fingers follow at residues 116-140 and 150-172; these read GLCQ…VYQH and YMCP…LLIH. The stretch at 257–366 forms a coiled coil; it reads KWALRRQNEP…EKMDMMLRAQ (110 aa). Residues 278–319 are disordered; it reads RTAKKSRRDNETPEEREVRRMRDREAKRLQRMQETDEQRARR.

This sequence belongs to the krueppel C2H2-type zinc-finger protein family.

The protein localises to the nucleus. In terms of biological role, may be involved in transcriptional regulation. This Bos taurus (Bovine) protein is Zinc finger protein 821 (ZNF821).